Reading from the N-terminus, the 901-residue chain is HTH-type transcriptional regulator MalT (901 aa).

39 to 46 is an ATP binding site; the sequence is SPAGYGKT. The region spanning 829-894 is the HTH luxR-type domain; that stretch reads ELIRTSPLTQ…DAVQHAQQLL (66 aa). The segment at residues 853–872 is a DNA-binding region (H-T-H motif); sequence NEQIAGELAVAATTIKTHIR.

This sequence belongs to the MalT family. In terms of assembly, monomer in solution. Oligomerizes to an active state in the presence of the positive effectors ATP and maltotriose.

With respect to regulation, activated by ATP and maltotriose, which are both required for DNA binding. Its function is as follows. Positively regulates the transcription of the maltose regulon whose gene products are responsible for uptake and catabolism of malto-oligosaccharides. Specifically binds to the promoter region of its target genes, recognizing a short DNA motif called the MalT box. The protein is HTH-type transcriptional regulator MalT of Salmonella heidelberg (strain SL476).